Consider the following 212-residue polypeptide: Ribosomal RNA small subunit methyltransferase G (212 aa).

Residues Gly-72, Leu-77, 123–124 (VE), and Arg-138 contribute to the S-adenosyl-L-methionine site.

It belongs to the methyltransferase superfamily. RNA methyltransferase RsmG family.

It localises to the cytoplasm. It carries out the reaction guanosine(527) in 16S rRNA + S-adenosyl-L-methionine = N(7)-methylguanosine(527) in 16S rRNA + S-adenosyl-L-homocysteine. Functionally, specifically methylates the N7 position of guanine in position 527 of 16S rRNA. The protein is Ribosomal RNA small subunit methyltransferase G of Histophilus somni (strain 2336) (Haemophilus somnus).